The following is a 364-amino-acid chain: Geranylgeranyl pyrophosphate synthase janG (364 aa).

3 residues coordinate isopentenyl diphosphate: K83, R86, and H115. 2 residues coordinate Mg(2+): D122 and D126. Position 131 (R131) interacts with dimethylallyl diphosphate. R132 contacts isopentenyl diphosphate. Positions 209, 210, and 243 each coordinate dimethylallyl diphosphate. D246 contacts Mg(2+). Positions 250, 260, and 270 each coordinate dimethylallyl diphosphate.

It belongs to the FPP/GGPP synthase family. Requires Mg(2+) as cofactor.

The enzyme catalyses isopentenyl diphosphate + dimethylallyl diphosphate = (2E)-geranyl diphosphate + diphosphate. It catalyses the reaction isopentenyl diphosphate + (2E)-geranyl diphosphate = (2E,6E)-farnesyl diphosphate + diphosphate. The catalysed reaction is isopentenyl diphosphate + (2E,6E)-farnesyl diphosphate = (2E,6E,10E)-geranylgeranyl diphosphate + diphosphate. It functions in the pathway secondary metabolite biosynthesis. Geranylgeranyl pyrophosphate synthase; part of the gene cluster that mediates the biosynthesis of the indole diterpenes janthitremanes such as shearinine K or shearinine A. The geranylgeranyl diphosphate (GGPP) synthase janG catalyzes the first step in janthitremane biosynthesis via conversion of farnesyl pyrophosphate and isopentyl pyrophosphate into geranylgeranyl pyrophosphate (GGPP). Condensation of indole-3-glycerol phosphate with GGPP by the prenyl transferase janC then forms 3-geranylgeranylindole (3-GGI). Epoxidation by the FAD-dependent monooxygenase janM leads to a epoxidized-GGI that is substrate of the terpene cyclase janB for cyclization to yield paspaline. Paspaline is subsequently converted to 13-desoxypaspaline by the cytochrome P450 monooxygenase janP, via beta-PC-M6 in a series of alpha-face oxidations. The cytochrome P450 monooxygenase janQ is proposed to carry out sequential beta-face oxidation steps at C-7 and C-13 of 13-desoxypaspaline to form paspalicine and paspalinine respectively. The indole diterpene prenyltransferase janD may then convert paspalinine into shearinine K which is substrate of janO and/or additional enzymes for oxidation and cyclization to generate shearinine A. This Penicillium janthinellum (Penicillium vitale) protein is Geranylgeranyl pyrophosphate synthase janG.